A 473-amino-acid chain; its full sequence is Sun domain-containing protein 1 (473 aa).

Residues 1 to 47 (MALRHTISPQFSNRHSPPVTRSVSRTGVHQPLDTSTPVTRRDSQPGT) are disordered. Residues 7 to 47 (ISPQFSNRHSPPVTRSVSRTGVHQPLDTSTPVTRRDSQPGT) show a composition bias toward polar residues. Coiled coils occupy residues 163–191 (ISNL…LENV) and 204–235 (EELK…STKI). A disordered region spans residues 237-257 (HSTPEKAPETAPTASLPPSSQ). The segment covering 248–257 (PTASLPPSSQ) has biased composition (polar residues). A helical membrane pass occupies residues 262–282 (HITRRALLGVNVANSLIGASI). Positions 279-443 (GASIDHSCSS…YLIRVYGEPV (165 aa)) constitute an SUN domain. Residues 443 to 473 (VDPPKETQPMTDNGTESKLESAIVNSVSETA) are disordered.

It localises to the nucleus membrane. The protein localises to the nucleus envelope. Functionally, involved in centrosome attachment to the nucleus. Required for zyg-12 localization to the nuclear envelope. Together with pot-1, it is required to anchor telomeres to the nuclear envelope in embryos. The chain is Sun domain-containing protein 1 from Caenorhabditis elegans.